A 400-amino-acid polypeptide reads, in one-letter code: Large envelope protein (400 aa).

Met1 is subject to N-acetylmethionine. Disordered regions lie at residues 1–24 and 89–116; these read MGGW…PLGF and PAMP…RDSH. The N-myristoyl glycine; by host moiety is linked to residue Gly2. Positions 2–119 are pre-S1; the sequence is GGWSSKPRKG…PPLRDSHPQA (118 aa). Residues 2–174 are pre-S; that stretch reads GGWSSKPRKG…SSRIGDPAPN (173 aa). The Virion surface; in external conformation segment spans residues 2–181; it reads GGWSSKPRKG…APNMENITSG (180 aa). Over 2–253 the chain is Intravirion; in internal conformation; the sequence is GGWSSKPRKG…PGYRWMCLRR (252 aa). N-linked (GlcNAc...) asparagine glycosylation is present at Trp4. Polar residues predominate over residues 96–106; the sequence is STNRQSGRQPT. Residues 120 to 174 are pre-S2; sequence MQWNSTAFHQALQDPRVRGLYFPAGGSSSGTLNPVPTIASHISSISSRIGDPAPN. A helical transmembrane segment spans residues 182 to 202; the sequence is FLGPLLVLQAGFFLLTRILTI. Topologically, residues 203–253 are intravirion; in external conformation; the sequence is PQSLDSWWTSLNFLGGAPVCLGQNSQSPTSNHSPTSCPPICPGYRWMCLRR. The helical transmembrane segment at 254-274 threads the bilayer; the sequence is FIIFLFILLLCLIFLLVLLDY. Over 275–348 the chain is Virion surface; sequence QGMLPVCPLI…WASVRFSWLS (74 aa). Asn320 carries an N-linked (GlcNAc...) asparagine; by host glycan. The helical transmembrane segment at 349-369 threads the bilayer; it reads LLVPFVQWFVGLSPTVWLSAI. The Intravirion segment spans residues 370–375; that stretch reads WMMWYW. The helical transmembrane segment at 376-398 threads the bilayer; sequence GPSLYNILSPFIPLLPIFFCLWV. The Virion surface portion of the chain corresponds to 399–400; sequence YI.

Belongs to the orthohepadnavirus major surface antigen family. In its internal form (Li-HBsAg), interacts with the capsid protein and with the isoform S. Interacts with host chaperone CANX. As to quaternary structure, associates with host chaperone CANX through its pre-S2 N glycan; this association may be essential for isoform M proper secretion. In terms of assembly, interacts with isoform L. Interacts with the antigens of satellite virus HDV (HDVAgs); this interaction is required for encapsidation of HDV genomic RNA. Post-translationally, isoform M is N-terminally acetylated by host at a ratio of 90%, and N-glycosylated by host at the pre-S2 region. In terms of processing, myristoylated.

Its subcellular location is the virion membrane. Functionally, the large envelope protein exists in two topological conformations, one which is termed 'external' or Le-HBsAg and the other 'internal' or Li-HBsAg. In its external conformation the protein attaches the virus to cell receptors and thereby initiating infection. This interaction determines the species specificity and liver tropism. This attachment induces virion internalization predominantly through caveolin-mediated endocytosis. The large envelope protein also assures fusion between virion membrane and endosomal membrane. In its internal conformation the protein plays a role in virion morphogenesis and mediates the contact with the nucleocapsid like a matrix protein. The middle envelope protein plays an important role in the budding of the virion. It is involved in the induction of budding in a nucleocapsid independent way. In this process the majority of envelope proteins bud to form subviral lipoprotein particles of 22 nm of diameter that do not contain a nucleocapsid. In Hepatitis B virus genotype A1 subtype adw (isolate Philippines/pFDW294/1988) (HBV-A), this protein is Large envelope protein.